Reading from the N-terminus, the 276-residue chain is D-aminoacyl-tRNA deacylase (276 aa).

This sequence belongs to the DtdA deacylase family. As to quaternary structure, monomer. Zn(2+) serves as cofactor.

The enzyme catalyses a D-aminoacyl-tRNA + H2O = a tRNA + a D-alpha-amino acid + H(+). It catalyses the reaction glycyl-tRNA(Ala) + H2O = tRNA(Ala) + glycine + H(+). Functionally, D-aminoacyl-tRNA deacylase with broad substrate specificity. By recycling D-aminoacyl-tRNA to D-amino acids and free tRNA molecules, this enzyme counteracts the toxicity associated with the formation of D-aminoacyl-tRNA entities in vivo. The polypeptide is D-aminoacyl-tRNA deacylase (Staphylothermus marinus (strain ATCC 43588 / DSM 3639 / JCM 9404 / F1)).